Consider the following 209-residue polypeptide: Probable L-serine dehydratase, alpha chain (209 aa).

It belongs to the iron-sulfur dependent L-serine dehydratase family. As to quaternary structure, heterodimer of an alpha chain and a beta chain. It depends on [4Fe-4S] cluster as a cofactor.

The enzyme catalyses L-serine = pyruvate + NH4(+). Its pathway is carbohydrate biosynthesis; gluconeogenesis. In Latilactobacillus sakei (Lactobacillus sakei), this protein is Probable L-serine dehydratase, alpha chain (sdhA).